The following is a 419-amino-acid chain: ATP phosphoribosyltransferase regulatory subunit (419 aa).

This sequence belongs to the class-II aminoacyl-tRNA synthetase family. HisZ subfamily. Heteromultimer composed of HisG and HisZ subunits.

Its subcellular location is the cytoplasm. It functions in the pathway amino-acid biosynthesis; L-histidine biosynthesis; L-histidine from 5-phospho-alpha-D-ribose 1-diphosphate: step 1/9. Required for the first step of histidine biosynthesis. May allow the feedback regulation of ATP phosphoribosyltransferase activity by histidine. This chain is ATP phosphoribosyltransferase regulatory subunit, found in Ruminiclostridium cellulolyticum (strain ATCC 35319 / DSM 5812 / JCM 6584 / H10) (Clostridium cellulolyticum).